The sequence spans 623 residues: Glutathione import ATP-binding protein GsiA (623 aa).

2 ABC transporter domains span residues 15–269 (VENL…RALL) and 314–564 (LRVR…RKLL). Residues 49-56 (GESGSGKS) and 357-364 (GESGSGKS) each bind ATP.

The protein belongs to the ABC transporter superfamily. Glutathione importer (TC 3.A.1.5.11) family. The complex is composed of two ATP-binding proteins (GsiA), two transmembrane proteins (GsiC and GsiD) and a solute-binding protein (GsiB).

It localises to the cell inner membrane. It carries out the reaction glutathione(out) + ATP + H2O = glutathione(in) + ADP + phosphate + H(+). Part of the ABC transporter complex GsiABCD involved in glutathione import. Responsible for energy coupling to the transport system. This is Glutathione import ATP-binding protein GsiA from Shigella sonnei (strain Ss046).